A 106-amino-acid polypeptide reads, in one-letter code: MMIVTTDRIDGYNVKAVKGYVKGSTVQTKHIGRDITAGLKGLVGGEIKGYSEMMDEARKLAIHRMAQDAEAKGANAVIGFRLQTSTVMANAAEIIAYGTAVEVEKE.

Belongs to the UPF0145 family.

This chain is UPF0145 protein BH0643, found in Halalkalibacterium halodurans (strain ATCC BAA-125 / DSM 18197 / FERM 7344 / JCM 9153 / C-125) (Bacillus halodurans).